The primary structure comprises 123 residues: Small ribosomal subunit protein uS12 (123 aa).

The interval Met1 to Arg30 is disordered. Over residues Gly11 to Lys20 the composition is skewed to basic and acidic residues. Asp89 is subject to 3-methylthioaspartic acid.

The protein belongs to the universal ribosomal protein uS12 family. In terms of assembly, part of the 30S ribosomal subunit. Contacts proteins S8 and S17. May interact with IF1 in the 30S initiation complex.

Its function is as follows. With S4 and S5 plays an important role in translational accuracy. In terms of biological role, interacts with and stabilizes bases of the 16S rRNA that are involved in tRNA selection in the A site and with the mRNA backbone. Located at the interface of the 30S and 50S subunits, it traverses the body of the 30S subunit contacting proteins on the other side and probably holding the rRNA structure together. The combined cluster of proteins S8, S12 and S17 appears to hold together the shoulder and platform of the 30S subunit. The protein is Small ribosomal subunit protein uS12 (rpsL) of Streptomyces avermitilis (strain ATCC 31267 / DSM 46492 / JCM 5070 / NBRC 14893 / NCIMB 12804 / NRRL 8165 / MA-4680).